Consider the following 134-residue polypeptide: Phospholipase A2 (134 aa).

Ca(2+) contacts are provided by W8, G10, and G12. Cystine bridges form between C9/C31, C30/C70, C37/C63, C61/C95, and C105/C113. The N-linked (GlcNAc...) asparagine glycan is linked to N13. H34 is a catalytic residue. D35 is a Ca(2+) binding site. D64 is a catalytic residue.

The protein belongs to the phospholipase A2 family. Group III subfamily. The cofactor is Ca(2+). As to expression, expressed by the venom gland.

It localises to the secreted. The enzyme catalyses a 1,2-diacyl-sn-glycero-3-phosphocholine + H2O = a 1-acyl-sn-glycero-3-phosphocholine + a fatty acid + H(+). Functionally, PLA2 catalyzes the calcium-dependent hydrolysis of the 2-acyl groups in 3-sn-phosphoglycerides. In Apis cerana cerana (Oriental honeybee), this protein is Phospholipase A2.